An 85-amino-acid polypeptide reads, in one-letter code: Depressant insect toxin BmK ITa1 (85 aa).

The first 21 residues, 1 to 21, serve as a signal peptide directing secretion; it reads MKLFLLLLISASMLIDGLVNA. One can recognise an LCN-type CS-alpha/beta domain in the interval 22 to 82; it reads DGYIRGSNGC…TWKSESNTCG (61 aa). 4 disulfide bridges follow: C31/C81, C35/C56, C42/C63, and C46/C65. G82 is modified (glycine amide).

Belongs to the long (4 C-C) scorpion toxin superfamily. Sodium channel inhibitor family. Beta subfamily. As to expression, expressed by the venom gland.

It localises to the secreted. Functionally, depressant insect toxins cause a transient contraction paralysis followed by a slow flaccid paralysis. They bind voltage-independently to sodium channels (Nav) and block action potentials, primarily by depolarizing the axonal membrane and suppressing the sodium current. The protein is Depressant insect toxin BmK ITa1 of Olivierus martensii (Manchurian scorpion).